Consider the following 120-residue polypeptide: Flagellar protein FliT (120 aa).

Residues 1-50 (MNDFISSLNNWQALYALSNTMLSLANSGQWDELIEQEVKYVTLVEAIARN) are required for homodimerization. The segment at 59–97 (FQEKARELLTKVLANEAALKIKLQARMEELRVLIEQNGN) is fliD binding.

It belongs to the FliT family. Homodimer. Interacts with FliD and FlhC.

Its subcellular location is the cytoplasm. It is found in the cytosol. In terms of biological role, dual-function protein that regulates the transcription of class 2 flagellar operons and that also acts as an export chaperone for the filament-capping protein FliD. As a transcriptional regulator, acts as an anti-FlhDC factor; it directly binds FlhC, thus inhibiting the binding of the FlhC/FlhD complex to class 2 promoters, resulting in decreased expression of class 2 flagellar operons. As a chaperone, effects FliD transition to the membrane by preventing its premature polymerization, and by directing it to the export apparatus. This is Flagellar protein FliT from Cronobacter sakazakii (strain ATCC BAA-894) (Enterobacter sakazakii).